The following is a 184-amino-acid chain: Photosystem I assembly protein Ycf4 (184 aa).

2 consecutive transmembrane segments (helical) span residues 22 to 42 (FCWA…GISS) and 57 to 77 (IIFF…LFIS).

The protein belongs to the Ycf4 family.

It is found in the plastid. The protein localises to the chloroplast thylakoid membrane. Seems to be required for the assembly of the photosystem I complex. This Populus alba (White poplar) protein is Photosystem I assembly protein Ycf4.